The primary structure comprises 89 residues: Dynein light chain 2, cytoplasmic (89 aa).

It belongs to the dynein light chain family.

Its subcellular location is the cytoplasm. It localises to the cytoskeleton. Its function is as follows. Acts as a non-catalytic accessory component of a dynein complex. This is Dynein light chain 2, cytoplasmic (Cdlc2) from Drosophila melanogaster (Fruit fly).